The sequence spans 228 residues: MHTKWKTWAHVTKLDPDKHLTEDEIAEIATSGTDALILSGTLNITKDNMSQLRDQVKEYGLPLVVEPAGPESVIFHGIDLLYVASVMNTSDARWIVGKHRDWAMNPDIVWEKVIPEAYIVLNPNSAVGRVTGADCGISAEEVAAYASIADHYFKFPIVYIEYSGMYGNPDIVKRAGEAIDHAVLYYGGGIDSAEKAAEMAKYADTIVVGNAVYEKGVKTLLETVQAVQ.

K13 is a binding site for sn-glycerol 1-phosphate. Mg(2+) contacts are provided by D15 and T41. Sn-glycerol 1-phosphate contacts are provided by residues 159-164 (YIEYSG), G189, and 209-210 (GN).

This sequence belongs to the GGGP/HepGP synthase family. Group I subfamily. The cofactor is Mg(2+).

The protein localises to the cytoplasm. The catalysed reaction is sn-glycerol 1-phosphate + (2E,6E,10E)-geranylgeranyl diphosphate = sn-3-O-(geranylgeranyl)glycerol 1-phosphate + diphosphate. It participates in membrane lipid metabolism; glycerophospholipid metabolism. Prenyltransferase that catalyzes the transfer of the geranylgeranyl moiety of geranylgeranyl diphosphate (GGPP) to the C3 hydroxyl of sn-glycerol-1-phosphate (G1P). This reaction is the first ether-bond-formation step in the biosynthesis of archaeal membrane lipids. The protein is Geranylgeranylglyceryl phosphate synthase of Methanospirillum hungatei JF-1 (strain ATCC 27890 / DSM 864 / NBRC 100397 / JF-1).